The primary structure comprises 394 residues: Elongation factor Tu (394 aa).

Residues Lys10–Asp204 enclose the tr-type G domain. The G1 stretch occupies residues Gly19–Thr26. Residue Gly19 to Thr26 coordinates GTP. Residue Thr26 coordinates Mg(2+). The segment at Gly60–Asn64 is G2. The G3 stretch occupies residues Asp81–Gly84. GTP is bound by residues Asp81–His85 and Asn136–Asp139. The segment at Asn136–Asp139 is G4. A G5 region spans residues Ser174–Leu176.

This sequence belongs to the TRAFAC class translation factor GTPase superfamily. Classic translation factor GTPase family. EF-Tu/EF-1A subfamily. In terms of assembly, monomer.

It localises to the cytoplasm. It catalyses the reaction GTP + H2O = GDP + phosphate + H(+). GTP hydrolase that promotes the GTP-dependent binding of aminoacyl-tRNA to the A-site of ribosomes during protein biosynthesis. This chain is Elongation factor Tu, found in Mycoplasmoides gallisepticum (strain R(low / passage 15 / clone 2)) (Mycoplasma gallisepticum).